The sequence spans 206 residues: Small ribosomal subunit protein uS4 (206 aa).

The 61-residue stretch at 96–156 (GRLDNVVYRM…EKAKNQLRVK (61 aa)) folds into the S4 RNA-binding domain.

It belongs to the universal ribosomal protein uS4 family. In terms of assembly, part of the 30S ribosomal subunit. Contacts protein S5. The interaction surface between S4 and S5 is involved in control of translational fidelity.

In terms of biological role, one of the primary rRNA binding proteins, it binds directly to 16S rRNA where it nucleates assembly of the body of the 30S subunit. Functionally, with S5 and S12 plays an important role in translational accuracy. The polypeptide is Small ribosomal subunit protein uS4 (Marinobacter nauticus (strain ATCC 700491 / DSM 11845 / VT8) (Marinobacter aquaeolei)).